A 437-amino-acid chain; its full sequence is Methylenetetrahydrofolate--tRNA-(uracil-5-)-methyltransferase TrmFO (437 aa).

8–13 (GAGLAG) contributes to the FAD binding site.

This sequence belongs to the MnmG family. TrmFO subfamily. The cofactor is FAD.

It is found in the cytoplasm. It carries out the reaction uridine(54) in tRNA + (6R)-5,10-methylene-5,6,7,8-tetrahydrofolate + NADH + H(+) = 5-methyluridine(54) in tRNA + (6S)-5,6,7,8-tetrahydrofolate + NAD(+). It catalyses the reaction uridine(54) in tRNA + (6R)-5,10-methylene-5,6,7,8-tetrahydrofolate + NADPH + H(+) = 5-methyluridine(54) in tRNA + (6S)-5,6,7,8-tetrahydrofolate + NADP(+). In terms of biological role, catalyzes the folate-dependent formation of 5-methyl-uridine at position 54 (M-5-U54) in all tRNAs. The chain is Methylenetetrahydrofolate--tRNA-(uracil-5-)-methyltransferase TrmFO from Desulfitobacterium hafniense (strain Y51).